The following is a 701-amino-acid chain: Elongation factor G 1 (701 aa).

In terms of domain architecture, tr-type G spans 5 to 281 (SKYRNIGIFA…AVVDYLPSPT (277 aa)). GTP is bound by residues 14 to 21 (AHVDAGKT), 78 to 82 (DTPGH), and 132 to 135 (NKLD).

It belongs to the TRAFAC class translation factor GTPase superfamily. Classic translation factor GTPase family. EF-G/EF-2 subfamily.

It localises to the cytoplasm. Its function is as follows. Catalyzes the GTP-dependent ribosomal translocation step during translation elongation. During this step, the ribosome changes from the pre-translocational (PRE) to the post-translocational (POST) state as the newly formed A-site-bound peptidyl-tRNA and P-site-bound deacylated tRNA move to the P and E sites, respectively. Catalyzes the coordinated movement of the two tRNA molecules, the mRNA and conformational changes in the ribosome. The chain is Elongation factor G 1 from Colwellia psychrerythraea (strain 34H / ATCC BAA-681) (Vibrio psychroerythus).